A 422-amino-acid polypeptide reads, in one-letter code: Cytochrome P450-pinF1, plant-inducible (422 aa).

Residue cysteine 369 participates in heme binding.

This sequence belongs to the cytochrome P450 family. Requires heme as cofactor.

In terms of biological role, not essential for virulence, but may be involved in the detoxification of plant protective agents at the site of wounding. The sequence is that of Cytochrome P450-pinF1, plant-inducible (cyp103) from Rhizobium radiobacter (Agrobacterium tumefaciens).